The primary structure comprises 358 residues: Vesicular integral-membrane protein VIP36 (358 aa).

A signal peptide spans 1–46; that stretch reads MAAEAWLWRWGWGWGQRCPGRPGLPGPGPSPTTFLHLLLLLGPVAA. The Lumenal portion of the chain corresponds to 47–324; it reads DITDGNSEHL…FRNGPLTGWR (278 aa). An L-type lectin-like domain is found at 54 to 278; that stretch reads EHLKREHSLI…DIISIKLFQL (225 aa). The a carbohydrate site is built by Ser-98 and Asp-133. Ca(2+)-binding residues include Asp-164, Tyr-166, and Asn-168. 166–168 contributes to the a carbohydrate binding site; the sequence is YPN. Asn-185 carries N-linked (GlcNAc...) asparagine glycosylation. His-192 contacts a carbohydrate. Asp-195 lines the Ca(2+) pocket. Cys-204 and Cys-241 are oxidised to a cystine. Position 262–264 (262–264) interacts with a carbohydrate; sequence GDL. Residues 325–347 form a helical membrane-spanning segment; it reads VFLLLLCALLGVVVCAVVGAVVF. At 348–358 the chain is on the cytoplasmic side; that stretch reads QKRQERNKRFY.

Ca(2+) serves as cofactor.

The protein localises to the golgi apparatus membrane. In terms of biological role, plays a role as an intracellular lectin in the early secretory pathway. Interacts with N-acetyl-D-galactosamine and high-mannose type glycans and may also bind to O-linked glycans. Involved in the transport and sorting of glycoproteins carrying high mannose-type glycans. This chain is Vesicular integral-membrane protein VIP36 (Lman2), found in Mus musculus (Mouse).